The primary structure comprises 557 residues: MSLSTLKREQIKKDLKDQEFDVVIIGGGITGAGIALDASERGMKVALVEMQDFAQGTSSRSTKLVHGGLRYLKQLQVGVVAETGRERAIVYENGPHVTTPERMLLPMHKGGSMGKFTTSIGLAMYDRLAGVKKAERKTMLNAKETLEKEPLVKKAGLKGGGSYVEYRTDDARLTIEVMKRAEEKGAKVINHTKSVHFTYDSNEKVNGIQVEDQISNETYPIKAKKVINASGPWVDEVRSGDYARNNKQLRLTKGVHIVIDQSKFPLGQAVYFDTEKDGRMIFAIPREGKAYVGTTDTFYDNNKTSPLANQEDRDYLIDAINYMFPDVNVADEDIESSWAGVRPLILEEGKDPSEISRKDEVWEGKSGLLTIAGGKLTGYRHMALEIVDLLSKRLKSEFGLKFDKCATKHLTISGGDVGGSANFDKFIEQKVEEAKSYQIDESTARHFASKYGSNAEELFKIAQTAQYQETGLPLDIYTELVYSIQNEMVYRPTDFFIRRTGKLYFKIDDVLNYKEQVIDVMAGLLGYTNIEKEAYTKELQIAIDEAQTGNHQPAVKE.

Residue 21–49 (DVVIIGGGITGAGIALDASERGMKVALVE) coordinates FAD.

It belongs to the FAD-dependent glycerol-3-phosphate dehydrogenase family. The cofactor is FAD.

The protein resides in the cytoplasm. The catalysed reaction is a quinone + sn-glycerol 3-phosphate = dihydroxyacetone phosphate + a quinol. Its pathway is polyol metabolism; glycerol degradation via glycerol kinase pathway; glycerone phosphate from sn-glycerol 3-phosphate (aerobic route): step 1/1. The chain is Aerobic glycerol-3-phosphate dehydrogenase (glpD) from Staphylococcus saprophyticus subsp. saprophyticus (strain ATCC 15305 / DSM 20229 / NCIMB 8711 / NCTC 7292 / S-41).